The sequence spans 423 residues: 3-phosphoshikimate 1-carboxyvinyltransferase (423 aa).

The 3-phosphoshikimate site is built by K28, S29, and R33. Phosphoenolpyruvate is bound at residue K28. Phosphoenolpyruvate-binding residues include G96 and R124. Residues S169, S170, Q171, S198, E312, and H339 each contribute to the 3-phosphoshikimate site. Q171 provides a ligand contact to phosphoenolpyruvate. The Proton acceptor role is filled by E312. The phosphoenolpyruvate site is built by R343, R384, and K409.

The protein belongs to the EPSP synthase family. As to quaternary structure, monomer.

The protein localises to the cytoplasm. It carries out the reaction 3-phosphoshikimate + phosphoenolpyruvate = 5-O-(1-carboxyvinyl)-3-phosphoshikimate + phosphate. The protein operates within metabolic intermediate biosynthesis; chorismate biosynthesis; chorismate from D-erythrose 4-phosphate and phosphoenolpyruvate: step 6/7. Catalyzes the transfer of the enolpyruvyl moiety of phosphoenolpyruvate (PEP) to the 5-hydroxyl of shikimate-3-phosphate (S3P) to produce enolpyruvyl shikimate-3-phosphate and inorganic phosphate. This Acidothermus cellulolyticus (strain ATCC 43068 / DSM 8971 / 11B) protein is 3-phosphoshikimate 1-carboxyvinyltransferase.